The chain runs to 352 residues: RING finger protein 39 (352 aa).

The RING-type zinc-finger motif lies at 20 to 67 (CPLCGGPFEDPVLLACEHSFCRSCLARCWGSPAAPGSEEATPSCPCCG). The tract at residues 98 to 118 (PGARTGRRRGGRIPTMGCLDP) is disordered. The region spanning 142-352 (EDLPEDYPVV…APLRIVPGEA (211 aa)) is the B30.2/SPRY domain.

In terms of tissue distribution, expressed in the hippocampus. Expression is rapidly up-regulated in granule cells of the dentate gyrus after LTP induction.

It is found in the cytoplasm. The catalysed reaction is S-ubiquitinyl-[E2 ubiquitin-conjugating enzyme]-L-cysteine + [acceptor protein]-L-lysine = [E2 ubiquitin-conjugating enzyme]-L-cysteine + N(6)-ubiquitinyl-[acceptor protein]-L-lysine.. Its pathway is protein modification; protein ubiquitination. Functionally, plays an inhibitory role in anti-RNA viral innate immunity by targeting the adapter DDX3X and promoting its 'Lys-48'-linked polyubiquitination. Alternatively, enhances the cGAS-STING pathway activation by promoting 'Lys-63'-linked ubiquitination of STING1, facilitating the STING1-TBK1 complex formation and STING1 activation. In Rattus norvegicus (Rat), this protein is RING finger protein 39 (Rnf39).